Consider the following 468-residue polypeptide: 3-isopropylmalate dehydratase large subunit (468 aa).

[4Fe-4S] cluster is bound by residues cysteine 349, cysteine 409, and cysteine 412.

This sequence belongs to the aconitase/IPM isomerase family. LeuC type 1 subfamily. Heterodimer of LeuC and LeuD. It depends on [4Fe-4S] cluster as a cofactor.

It carries out the reaction (2R,3S)-3-isopropylmalate = (2S)-2-isopropylmalate. It participates in amino-acid biosynthesis; L-leucine biosynthesis; L-leucine from 3-methyl-2-oxobutanoate: step 2/4. Functionally, catalyzes the isomerization between 2-isopropylmalate and 3-isopropylmalate, via the formation of 2-isopropylmaleate. The polypeptide is 3-isopropylmalate dehydratase large subunit (Shewanella baltica (strain OS223)).